The sequence spans 261 residues: Cytochrome c oxidase subunit 3 (261 aa).

At 1 to 15 (MTHQTHAYHMVNPSP) the chain is on the mitochondrial matrix side. Residues 16-34 (WPLTGALSALLMTSGLAMW) form a helical membrane-spanning segment. The Mitochondrial intermembrane portion of the chain corresponds to 35–40 (FHFNST). The helical transmembrane segment at 41 to 66 (LLLALGLLTNILTMYQWWRDIIREST) threads the bilayer. Over 67 to 72 (FQGHHT) the chain is Mitochondrial matrix. A helical transmembrane segment spans residues 73–105 (SIVQKGLRYGMILFIISEVFFFSGFFWAFYHSS). At 106–128 (LAPTPELGGCWPPTGIHPLNPLE) the chain is on the mitochondrial intermembrane side. The helical transmembrane segment at 129-152 (VPLLNTSVLLASGVSITWAHHSLM) threads the bilayer. Topologically, residues 153–155 (EGN) are mitochondrial matrix. Residues 156–183 (RKNMLQGLFITISLGVYFTLLQASEYYE) form a helical membrane-spanning segment. Residues 184–190 (ASFTISD) are Mitochondrial intermembrane-facing. A helical transmembrane segment spans residues 191 to 223 (GVYGSTFFVATGFHGLHVIIGSTFLIVCFLRQL). The Mitochondrial matrix portion of the chain corresponds to 224–232 (KFHFTSSHH). A helical transmembrane segment spans residues 233–256 (FGFEAAAWYWHFVDVVWLFLYVSI). The Mitochondrial intermembrane portion of the chain corresponds to 257-261 (YWWGS).

This sequence belongs to the cytochrome c oxidase subunit 3 family. Component of the cytochrome c oxidase (complex IV, CIV), a multisubunit enzyme composed of 14 subunits. The complex is composed of a catalytic core of 3 subunits MT-CO1, MT-CO2 and MT-CO3, encoded in the mitochondrial DNA, and 11 supernumerary subunits COX4I, COX5A, COX5B, COX6A, COX6B, COX6C, COX7A, COX7B, COX7C, COX8 and NDUFA4, which are encoded in the nuclear genome. The complex exists as a monomer or a dimer and forms supercomplexes (SCs) in the inner mitochondrial membrane with NADH-ubiquinone oxidoreductase (complex I, CI) and ubiquinol-cytochrome c oxidoreductase (cytochrome b-c1 complex, complex III, CIII), resulting in different assemblies (supercomplex SCI(1)III(2)IV(1) and megacomplex MCI(2)III(2)IV(2)).

It localises to the mitochondrion inner membrane. It catalyses the reaction 4 Fe(II)-[cytochrome c] + O2 + 8 H(+)(in) = 4 Fe(III)-[cytochrome c] + 2 H2O + 4 H(+)(out). In terms of biological role, component of the cytochrome c oxidase, the last enzyme in the mitochondrial electron transport chain which drives oxidative phosphorylation. The respiratory chain contains 3 multisubunit complexes succinate dehydrogenase (complex II, CII), ubiquinol-cytochrome c oxidoreductase (cytochrome b-c1 complex, complex III, CIII) and cytochrome c oxidase (complex IV, CIV), that cooperate to transfer electrons derived from NADH and succinate to molecular oxygen, creating an electrochemical gradient over the inner membrane that drives transmembrane transport and the ATP synthase. Cytochrome c oxidase is the component of the respiratory chain that catalyzes the reduction of oxygen to water. Electrons originating from reduced cytochrome c in the intermembrane space (IMS) are transferred via the dinuclear copper A center (CU(A)) of subunit 2 and heme A of subunit 1 to the active site in subunit 1, a binuclear center (BNC) formed by heme A3 and copper B (CU(B)). The BNC reduces molecular oxygen to 2 water molecules using 4 electrons from cytochrome c in the IMS and 4 protons from the mitochondrial matrix. In Equus asinus (Donkey), this protein is Cytochrome c oxidase subunit 3 (MT-CO3).